The primary structure comprises 778 residues: Endonuclease MutS2 (778 aa).

332 to 339 (GPNTGGKT) is an ATP binding site. One can recognise a Smr domain in the interval 703 to 778 (IDLRGKMVDE…GLGCTVVTLK (76 aa)).

It belongs to the DNA mismatch repair MutS family. MutS2 subfamily. As to quaternary structure, homodimer. Binds to stalled ribosomes, contacting rRNA.

In terms of biological role, endonuclease that is involved in the suppression of homologous recombination and thus may have a key role in the control of bacterial genetic diversity. Functionally, acts as a ribosome collision sensor, splitting the ribosome into its 2 subunits. Detects stalled/collided 70S ribosomes which it binds and splits by an ATP-hydrolysis driven conformational change. Acts upstream of the ribosome quality control system (RQC), a ribosome-associated complex that mediates the extraction of incompletely synthesized nascent chains from stalled ribosomes and their subsequent degradation. Probably generates substrates for RQC. In Fusobacterium nucleatum subsp. nucleatum (strain ATCC 25586 / DSM 15643 / BCRC 10681 / CIP 101130 / JCM 8532 / KCTC 2640 / LMG 13131 / VPI 4355), this protein is Endonuclease MutS2.